Here is a 265-residue protein sequence, read N- to C-terminus: Phosphate import ATP-binding protein PstB 2 (265 aa).

Positions phenylalanine 13 to valine 260 constitute an ABC transporter domain. An ATP-binding site is contributed by glycine 45–serine 52.

This sequence belongs to the ABC transporter superfamily. Phosphate importer (TC 3.A.1.7) family. In terms of assembly, the complex is composed of two ATP-binding proteins (PstB), two transmembrane proteins (PstC and PstA) and a solute-binding protein (PstS).

The protein resides in the cell inner membrane. The catalysed reaction is phosphate(out) + ATP + H2O = ADP + 2 phosphate(in) + H(+). Its function is as follows. Part of the ABC transporter complex PstSACB involved in phosphate import. Responsible for energy coupling to the transport system. The chain is Phosphate import ATP-binding protein PstB 2 from Synechococcus sp. (strain JA-2-3B'a(2-13)) (Cyanobacteria bacterium Yellowstone B-Prime).